A 210-amino-acid polypeptide reads, in one-letter code: Large ribosomal subunit protein bL9 (210 aa).

A disordered region spans residues 172–210 (EAAAAALEPDSEEEFEAATPPSELAAEASDEDADDAKEA). Acidic residues predominate over residues 199 to 210 (ASDEDADDAKEA).

It belongs to the bacterial ribosomal protein bL9 family.

Functionally, binds to the 23S rRNA. In Sphingopyxis alaskensis (strain DSM 13593 / LMG 18877 / RB2256) (Sphingomonas alaskensis), this protein is Large ribosomal subunit protein bL9.